A 130-amino-acid polypeptide reads, in one-letter code: Cytochrome b-c1 complex subunit 7 (130 aa).

Belongs to the UQCRB/QCR7 family. As to quaternary structure, component of the ubiquinol-cytochrome c oxidoreductase (cytochrome b-c1 complex, complex III, CIII), a multisubunit enzyme composed of 3 respiratory subunits cytochrome b, cytochrome c1 and Rieske protein, 2 core protein subunits, and additional low-molecular weight protein subunits. The complex exists as an obligatory dimer and forms supercomplexes (SCs) in the inner mitochondrial membrane with cytochrome c oxidase (complex IV, CIV).

The protein localises to the mitochondrion inner membrane. Functionally, component of the ubiquinol-cytochrome c oxidoreductase, a multisubunit transmembrane complex that is part of the mitochondrial electron transport chain which drives oxidative phosphorylation. The respiratory chain contains 3 multisubunit complexes succinate dehydrogenase (complex II, CII), ubiquinol-cytochrome c oxidoreductase (cytochrome b-c1 complex, complex III, CIII) and cytochrome c oxidase (complex IV, CIV), that cooperate to transfer electrons derived from NADH and succinate to molecular oxygen, creating an electrochemical gradient over the inner membrane that drives transmembrane transport and the ATP synthase. The cytochrome b-c1 complex catalyzes electron transfer from ubiquinol to cytochrome c, linking this redox reaction to translocation of protons across the mitochondrial inner membrane, with protons being carried across the membrane as hydrogens on the quinol. In the process called Q cycle, 2 protons are consumed from the matrix, 4 protons are released into the intermembrane space and 2 electrons are passed to cytochrome c. This Echinococcus multilocularis (Fox tapeworm) protein is Cytochrome b-c1 complex subunit 7 (UBCRBP).